The chain runs to 209 residues: Large ribosomal subunit protein uL3 (209 aa).

Residues 128-156 (FAGGSRTHGQSDRLRAPGSVGGSSDPSRT) are disordered.

It belongs to the universal ribosomal protein uL3 family. Part of the 50S ribosomal subunit. Forms a cluster with proteins L14 and L19.

One of the primary rRNA binding proteins, it binds directly near the 3'-end of the 23S rRNA, where it nucleates assembly of the 50S subunit. This chain is Large ribosomal subunit protein uL3, found in Prosthecochloris aestuarii (strain DSM 271 / SK 413).